The following is a 94-amino-acid chain: CRISPR-associated endoribonuclease Cas2 (94 aa).

Aspartate 10 contributes to the Mg(2+) binding site.

Belongs to the CRISPR-associated endoribonuclease Cas2 protein family. In terms of assembly, homodimer, forms a heterotetramer with a Cas1 homodimer. Mg(2+) is required as a cofactor.

In terms of biological role, CRISPR (clustered regularly interspaced short palindromic repeat), is an adaptive immune system that provides protection against mobile genetic elements (viruses, transposable elements and conjugative plasmids). CRISPR clusters contain sequences complementary to antecedent mobile elements and target invading nucleic acids. CRISPR clusters are transcribed and processed into CRISPR RNA (crRNA). Functions as a ssRNA-specific endoribonuclease. Involved in the integration of spacer DNA into the CRISPR cassette. The protein is CRISPR-associated endoribonuclease Cas2 of Leptospira interrogans serogroup Icterohaemorrhagiae serovar Lai (strain 56601).